Reading from the N-terminus, the 244-residue chain is Small ribosomal subunit protein eS4 (244 aa).

The 66-residue stretch at 43-108 (LPLLLIVRDI…NYRVLFDRKG (66 aa)) folds into the S4 RNA-binding domain.

It belongs to the eukaryotic ribosomal protein eS4 family.

In Methanocaldococcus jannaschii (strain ATCC 43067 / DSM 2661 / JAL-1 / JCM 10045 / NBRC 100440) (Methanococcus jannaschii), this protein is Small ribosomal subunit protein eS4 (rps4e).